Consider the following 331-residue polypeptide: Glutamyl-tRNA reductase (331 aa).

Substrate contacts are provided by residues Thr49–Arg52, Ser107, Glu112–Gln114, and Gln118. The Nucleophile role is filled by Cys50. Gly184–Gly189 provides a ligand contact to NADP(+).

Belongs to the glutamyl-tRNA reductase family. In terms of assembly, homodimer.

The catalysed reaction is (S)-4-amino-5-oxopentanoate + tRNA(Glu) + NADP(+) = L-glutamyl-tRNA(Glu) + NADPH + H(+). Its pathway is porphyrin-containing compound metabolism; protoporphyrin-IX biosynthesis; 5-aminolevulinate from L-glutamyl-tRNA(Glu): step 1/2. Functionally, catalyzes the NADPH-dependent reduction of glutamyl-tRNA(Glu) to glutamate 1-semialdehyde (GSA). This chain is Glutamyl-tRNA reductase, found in Acetivibrio thermocellus (strain ATCC 27405 / DSM 1237 / JCM 9322 / NBRC 103400 / NCIMB 10682 / NRRL B-4536 / VPI 7372) (Clostridium thermocellum).